The chain runs to 427 residues: Transcription factor MYB98 (427 aa).

The short motif at 195-202 (TRKLSSSS) is the Nuclear localization signal 1 element. 2 consecutive HTH myb-type domains span residues 212-267 (KSTL…RPDI) and 268-318 (KKET…RRQF). 2 consecutive DNA-binding regions (H-T-H motif) follow at residues 240-263 (WSHI…HNHL) and 291-314 (WAEI…NATK). Positions 361–368 (NKKKDVVV) match the Nuclear localization signal 2 motif.

As to expression, expressed at high levels in the synergid cells of the female gametophyte, and at lower levels in the endosperm of young seeds and the trichomes of young leaves and sepals.

The protein resides in the nucleus. Its function is as follows. Transcription factor that binds to the motif 5'-GTAACNT-3' in the promoter of target genes (e.g. DD11 and DD18) and promotes their expression within synergid cells (e.g. in the filiform apparatus) in ovules. Required for the formation of the filiform apparatus during synergid cell differentiation in the female gametophyte. Involved in pollen tube guidance to the micropyle. This is Transcription factor MYB98 from Arabidopsis thaliana (Mouse-ear cress).